Here is a 331-residue protein sequence, read N- to C-terminus: Ribosomal large subunit pseudouridine synthase D (331 aa).

Residues 25–97 (RRFDAVLAEL…IPLDILYEDE (73 aa)) enclose the S4 RNA-binding domain. Residue Asp145 is part of the active site.

It belongs to the pseudouridine synthase RluA family.

The protein localises to the cytoplasm. The enzyme catalyses uridine(1911/1915/1917) in 23S rRNA = pseudouridine(1911/1915/1917) in 23S rRNA. Functionally, responsible for synthesis of pseudouridine from uracil at positions 1911, 1915 and 1917 in 23S ribosomal RNA. In Xylella fastidiosa (strain Temecula1 / ATCC 700964), this protein is Ribosomal large subunit pseudouridine synthase D (rluD).